The primary structure comprises 304 residues: Methionyl-tRNA formyltransferase (304 aa).

110-113 lines the (6S)-5,6,7,8-tetrahydrofolate pocket; sequence SLLP.

This sequence belongs to the Fmt family.

The enzyme catalyses L-methionyl-tRNA(fMet) + (6R)-10-formyltetrahydrofolate = N-formyl-L-methionyl-tRNA(fMet) + (6S)-5,6,7,8-tetrahydrofolate + H(+). Attaches a formyl group to the free amino group of methionyl-tRNA(fMet). The formyl group appears to play a dual role in the initiator identity of N-formylmethionyl-tRNA by promoting its recognition by IF2 and preventing the misappropriation of this tRNA by the elongation apparatus. The sequence is that of Methionyl-tRNA formyltransferase from Gluconobacter oxydans (strain 621H) (Gluconobacter suboxydans).